Consider the following 378-residue polypeptide: Heterogeneous nuclear ribonucleoprotein A3 (378 aa).

M1 carries the N-acetylmethionine modification. Residues 1 to 10 (MEVKPPPGRP) show a composition bias toward pro residues. A disordered region spans residues 1-34 (MEVKPPPGRPQPDSGRRRRRRGEEGHDPKEPEQL). A Glycyl lysine isopeptide (Lys-Gly) (interchain with G-Cter in SUMO2) cross-link involves residue K4. S14 is subject to Phosphoserine. Positions 21–34 (RGEEGHDPKEPEQL) are enriched in basic and acidic residues. One can recognise an RRM 1 domain in the interval 35 to 118 (RKLFIGGLSF…RAVSREDSVK (84 aa)). A Glycyl lysine isopeptide (Lys-Gly) (interchain with G-Cter in SUMO2) cross-link involves residue K36. S43 is subject to Phosphoserine. R52 is subject to Dimethylated arginine; alternate. R52 carries the post-translational modification Omega-N-methylarginine; alternate. R76 is subject to Omega-N-methylarginine. Residues S112 and S116 each carry the phosphoserine modification. K118 participates in a covalent cross-link: Glycyl lysine isopeptide (Lys-Gly) (interchain with G-Cter in SUMO2). At T124 the chain carries Phosphothreonine. One can recognise an RRM 2 domain in the interval 126 to 205 (KKIFVGGIKE…CEVKKALSKQ (80 aa)). K134 is subject to N6-acetyllysine; alternate. K134 is covalently cross-linked (Glycyl lysine isopeptide (Lys-Gly) (interchain with G-Cter in SUMO2); alternate). Residues K151 and K182 each participate in a glycyl lysine isopeptide (Lys-Gly) (interchain with G-Cter in SUMO2) cross-link. Residues 204-225 (KQEMQSAGSQRGRGGGSGNFMG) form a disordered region. Residues R214, R216, R226, R239, and R246 each carry the omega-N-methylarginine; alternate modification. Residues R214, R216, R226, R239, and R246 each carry the asymmetric dimethylarginine; alternate modification. A compositionally biased stretch (gly residues) spans 214 to 225 (RGRGGGSGNFMG). The residue at position 257 (R257) is an Omega-N-methylarginine. R286 is subject to Asymmetric dimethylarginine. Residues 336-378 (SGQQQSNYGPMKGGSFGGRSSGSPYGGGYGSGGGSGGYGSRRF) are disordered. Gly residues predominate over residues 346–378 (MKGGSFGGRSSGSPYGGGYGSGGGSGGYGSRRF). S350 carries the phosphoserine modification. An Omega-N-methylarginine modification is found at R354. S358 is subject to Phosphoserine. Y360 and Y364 each carry phosphotyrosine. S366 and S370 each carry phosphoserine. Y373 bears the Phosphotyrosine mark. The residue at position 375 (S375) is a Phosphoserine.

Identified in the spliceosome C complex.

It localises to the nucleus. Plays a role in cytoplasmic trafficking of RNA. Binds to the cis-acting response element, A2RE. May be involved in pre-mRNA splicing. The chain is Heterogeneous nuclear ribonucleoprotein A3 (HNRNPA3) from Homo sapiens (Human).